A 162-amino-acid polypeptide reads, in one-letter code: Interleukin-15 (162 aa).

A signal peptide spans 1–29 (MRILKPHLRSTSIQCYLCLLLNSHFLTEA). The propeptide occupies 30–48 (GIHVFILGCISAGLPKTEA). 2 disulfides stabilise this stretch: Cys-83/Cys-133 and Cys-90/Cys-136. A glycan (N-linked (GlcNAc...) asparagine) is linked at Asn-108.

This sequence belongs to the IL-15/IL-21 family.

It is found in the secreted. Its function is as follows. Cytokine that plays a major role in the development of inflammatory and protective immune responses to microbial invaders and parasites by modulating immune cells of both the innate and adaptive immune systems. Stimulates the proliferation of natural killer cells, T-cells and B-cells and promotes the secretion of several cytokines. In monocytes, induces the production of IL8 and monocyte chemotactic protein 1/CCL2, two chemokines that attract neutrophils and monocytes respectively to sites of infection. Unlike most cytokines, which are secreted in soluble form, IL15 is expressed in association with its high affinity IL15RA on the surface of IL15-producing cells and delivers signals to target cells that express IL2RB and IL2RG receptor subunits. Binding to its receptor triggers the phosphorylation of JAK1 and JAK3 and the recruitment and subsequent phosphorylation of signal transducer and activator of transcription-3/STAT3 and STAT5. In mast cells, induces the rapid tyrosine phosphorylation of STAT6 and thereby controls mast cell survival and release of cytokines such as IL4. The protein is Interleukin-15 (IL15) of Ailuropoda melanoleuca (Giant panda).